Consider the following 754-residue polypeptide: Protein tyrosine phosphatase domain-containing protein 1 (754 aa).

In terms of domain architecture, Tyrosine-protein phosphatase spans 82–253 (YSSWVTDNIL…LTPLRNIFSC (172 aa)). Cysteine 190 acts as the Phosphocysteine intermediate in catalysis. Phosphoserine is present on residues serine 392 and serine 394. The segment covering 487-498 (SGAFSADVSGSH) has biased composition (polar residues). The segment at 487 to 554 (SGAFSADVSG…PRSPLDCGSS (68 aa)) is disordered. A Phosphoserine modification is found at serine 547.

The protein belongs to the protein-tyrosine phosphatase family. Non-receptor class PTPDC1 subfamily.

Functionally, may play roles in cilia formation and/or maintenance. This is Protein tyrosine phosphatase domain-containing protein 1 (PTPDC1) from Homo sapiens (Human).